The chain runs to 187 residues: MAQTTNDIKNGSILNLDGQLWQVIKFQHVKPGKGPAFVRTTIKNVLSGKIVDKTFNAGMKMDFETVDNRTLQYSYEDGDNFVFMDMTTFDQIMIPKTLVGDKAKYLLEGTDCIVSFHDGQPLSVELPASVVLTITHTEPGLQGNRSNAGTKPATVETGAEIQVPLFIGEGEKVKVNTDDGSYLGREN.

It belongs to the elongation factor P family.

It is found in the cytoplasm. It participates in protein biosynthesis; polypeptide chain elongation. Involved in peptide bond synthesis. Stimulates efficient translation and peptide-bond synthesis on native or reconstituted 70S ribosomes in vitro. Probably functions indirectly by altering the affinity of the ribosome for aminoacyl-tRNA, thus increasing their reactivity as acceptors for peptidyl transferase. This Bifidobacterium animalis subsp. lactis (strain AD011) protein is Elongation factor P.